The primary structure comprises 246 residues: Orotidine 5'-phosphate decarboxylase (246 aa).

Substrate contacts are provided by residues Asp-22, Lys-44, 71–80 (DLKFHDIPNT), Thr-131, Arg-192, Gln-201, Gly-221, and Arg-222. Residue Lys-73 is the Proton donor of the active site.

It belongs to the OMP decarboxylase family. Type 1 subfamily. In terms of assembly, homodimer.

The enzyme catalyses orotidine 5'-phosphate + H(+) = UMP + CO2. It functions in the pathway pyrimidine metabolism; UMP biosynthesis via de novo pathway; UMP from orotate: step 2/2. Catalyzes the decarboxylation of orotidine 5'-monophosphate (OMP) to uridine 5'-monophosphate (UMP). The sequence is that of Orotidine 5'-phosphate decarboxylase from Enterobacter sp. (strain 638).